The sequence spans 263 residues: HTH-type transcriptional repressor NanR (263 aa).

The interval 1-22 is disordered; it reads MGLMNAFDSQTEDSSPAIGRNL. The HTH gntR-type domain occupies 30–98; it reads KKLSEMVEEE…NGERARVSRP (69 aa). The H-T-H motif DNA-binding region spans 58 to 77; that stretch reads ERELMAFFNVGRPSVREALA.

This sequence belongs to the NanR family.

Functionally, transcriptional repressor that controls expression of the genes required for the catabolism of sialic acids. The sequence is that of HTH-type transcriptional repressor NanR from Shigella sonnei (strain Ss046).